A 628-amino-acid chain; its full sequence is Patulin synthase (628 aa).

The signal sequence occupies residues 1–20 (MRPIPSILGALGAFATLSAA). The N-linked (GlcNAc...) asparagine glycan is linked to asparagine 48. FAD is bound by residues 60-61 (TA) and 81-82 (EA). Asparagine 92 is a glycosylation site (N-linked (GlcNAc...) asparagine). FAD is bound at residue 147 to 150 (NYMA). 5 N-linked (GlcNAc...) asparagine glycosylation sites follow: asparagine 197, asparagine 260, asparagine 386, asparagine 429, and asparagine 486. Histidine 564 functions as the Proton acceptor in the catalytic mechanism. FAD-binding positions include alanine 598 and 609 to 610 (PQ).

This sequence belongs to the GMC oxidoreductase family. Homodimer. It depends on FAD as a cofactor.

The protein resides in the cytoplasm. The protein localises to the cell cortex. Its subcellular location is the vacuole. It localises to the secreted. It is found in the cell wall. It carries out the reaction (E)-ascladiol + A = patulin + AH2. It functions in the pathway mycotoxin biosynthesis; patulin biosynthesis. In terms of biological role, patulin synthase; part of the gene cluster that mediates the biosynthesis of patulin, an acetate-derived tetraketide mycotoxin produced by several fungal species that shows antimicrobial properties against several bacteria. PatE catalyzes the last step of the pathway which is the conversion of E-ascladiol to patulin. The pathway begins with the synthesis of 6-methylsalicylic acid by the polyketide synthase (PKS) patK via condensation of acetate and malonate units. The 6-methylsalicylic acid decarboxylase patG then catalyzes the decarboxylation of 6-methylsalicylic acid to yield m-cresol (also known as 3-methylphenol). These first reactions occur in the cytosol. The intermediate m-cresol is then transported into the endoplasmic reticulum where the cytochrome P450 monooxygenase patH converts it to m-hydroxybenzyl alcohol, which is further converted to gentisyl alcohol by the cytochrome P450 monooxygenase patI. The oxidoreductases patJ and patO further convert gentisyl alcohol to isoepoxydon in the vacuole. PatN catalyzes then the transformation of isoepoxydon into phyllostine. The cluster protein patF is responsible for the conversion from phyllostine to neopatulin whereas the alcohol dehydrogenase patD converts neopatulin to E-ascladiol. The steps between isoepoxydon and E-ascladiol occur in the cytosol, and E-ascladiol is probably secreted to the extracellular space by one of the cluster-specific transporters patC or patM. Finally, the secreted patulin synthase patE catalyzes the conversion of E-ascladiol to patulin. In Aspergillus clavatus (strain ATCC 1007 / CBS 513.65 / DSM 816 / NCTC 3887 / NRRL 1 / QM 1276 / 107), this protein is Patulin synthase.